Reading from the N-terminus, the 283-residue chain is Acetylglutamate kinase (283 aa).

Residues 64-65, Arg-86, and Asn-178 contribute to the substrate site; that span reads GG.

This sequence belongs to the acetylglutamate kinase family. ArgB subfamily.

It is found in the cytoplasm. The enzyme catalyses N-acetyl-L-glutamate + ATP = N-acetyl-L-glutamyl 5-phosphate + ADP. The protein operates within amino-acid biosynthesis; L-arginine biosynthesis; N(2)-acetyl-L-ornithine from L-glutamate: step 2/4. Functionally, catalyzes the ATP-dependent phosphorylation of N-acetyl-L-glutamate. The chain is Acetylglutamate kinase from Lactococcus lactis subsp. cremoris (strain SK11).